The chain runs to 542 residues: Chaperonin GroEL 2 (542 aa).

Residues 30-33, K51, 87-91, G415, and D495 contribute to the ATP site; these read TLGP and DGTTT.

The protein belongs to the chaperonin (HSP60) family. In terms of assembly, forms a cylinder of 14 subunits composed of two heptameric rings stacked back-to-back. Interacts with the co-chaperonin GroES.

The protein localises to the cytoplasm. It catalyses the reaction ATP + H2O + a folded polypeptide = ADP + phosphate + an unfolded polypeptide.. In terms of biological role, together with its co-chaperonin GroES, plays an essential role in assisting protein folding. The GroEL-GroES system forms a nano-cage that allows encapsulation of the non-native substrate proteins and provides a physical environment optimized to promote and accelerate protein folding. The chain is Chaperonin GroEL 2 from Methylococcus capsulatus (strain ATCC 33009 / NCIMB 11132 / Bath).